Here is a 404-residue protein sequence, read N- to C-terminus: Double-stranded RNA-binding protein 5 (404 aa).

2 DRBM domains span residues 1–70 and 87–155; these read MYKN…RLSL and VYKN…SLKQ. 3 disordered regions span residues 195–236, 263–320, and 336–362; these read RRRR…STEE, GGRT…RRNA, and RRRP…FSDP. Over residues 263–280 the composition is skewed to low complexity; it reads GGRTQDTASPAPAAAAAS. The segment covering 302–316 has biased composition (basic residues); that stretch reads AGAHAARRHAARQGG.

Functionally, binds double-stranded RNA. This Oryza sativa subsp. japonica (Rice) protein is Double-stranded RNA-binding protein 5 (DRB5).